The sequence spans 135 residues: MAKNSRSQWIAKNLQRLLNVGLIMLAAILVVFLVKETIHLGKVLFLSNQETSSYMLIEGIVIYFLYFEFIALIVKYFESGYHFPLRYFIYIGITAIIRLIIVDHENPIDTLIYSGSILVLVVTLYLANTERLKRE.

Transmembrane regions (helical) follow at residues 20–40 (VGLI…TIHL), 54–74 (YMLI…ALIV), 82–102 (HFPL…LIIV), and 107–127 (PIDT…LYLA).

Belongs to the PsiE family.

The protein localises to the cell inner membrane. The chain is Protein PsiE homolog from Yersinia pseudotuberculosis serotype IB (strain PB1/+).